Reading from the N-terminus, the 392-residue chain is Selenide, water dikinase 1 (392 aa).

The active site involves Cys31. Residues Lys32, Gly67–Asp69, Asp87, Asp110, and Gly161–Thr164 each bind ATP. Asp69 provides a ligand contact to Mg(2+). Asp110 provides a ligand contact to Mg(2+). Asp265 contributes to the Mg(2+) binding site.

Belongs to the selenophosphate synthase 1 family. Class II subfamily. Homodimer. The cofactor is Mg(2+).

Its subcellular location is the cell membrane. It localises to the nucleus membrane. The catalysed reaction is hydrogenselenide + ATP + H2O = selenophosphate + AMP + phosphate + 2 H(+). Synthesizes selenophosphate from selenide and ATP. The sequence is that of Selenide, water dikinase 1 (sephs1) from Xenopus tropicalis (Western clawed frog).